The chain runs to 1642 residues: MATAIRDVGVWRQTRTLLLKNYLVKCRTKKSSVQEILFPLFFLFWLILISMMHPNKKYEEVSDIELSPMDKSILSNLILGYTPVTNTTSSVMQRVSTDHLPDVLVTEEYASEKELLASSLSKPSNFVGVVFKDVMSYELRFFPDMVPVSSVYMDSRAGCSKSCDAAQYWSSGFTALQASIDAAIIQLKTNVSLWRELESTKAVIMGEAAVVEIDTFPRGVILIYLVIAFSPFGYFLAIHIVAEKEKRLKEFLKIMGLHDTAFWLSWVLLYTSLIFLMSLLMAVIATASSLFPQSSSIVIFLLFFLYGLSSVFFALMLTPLFKKSKHVGVVEFFVTVVFGFVGLLIVLVESFPRSLVWLFSPLCQCAFLIGIAQVMHLEDFNEGALFSSLTEGPYPLIITLTMLALDSVFYALLAVYLDQVIPGEFGLRRSSLYFLKPSYWSKNKRNYKELSEGNINGNISLNEIVEPVSSEFIGKEAIRISGIQKAYRKKNETVEALRNLSFDIYEGQITALLGHSGTGKSTLMNILCGLCPPSDGFASIYGHRVSEIDEMFEARKMIGICPQSDMNFDVLTVEENLSILASVKGIPANNIIQEVQKVLLDLDMQAIKDNQAKKLSGGQKRKLSLGIAVLGNPKILLLDEPTAGMDPCSRHIVWNLLKYRKANRVTVFSTHFMDEADILADRKAVISQGMLKCVGSSIFLKSKWGIGYRLSMYIDRYCATESLSSLVRQHIPAAALLQQNDQQIVYSLPFKDMDKFSGLFSALDIHSNLGVISYGVSMTTLEDVFLKLEVEAEIDQADYSVFTQQPREEETDSKSFDEMEQSLLILSETKASLVSTMSLWKQQVSTIAKFHFLSLKRESKSVRSVLLLLLIFFAVQIFMFLVHHSFKNAVVPIKLVPDLYFLKPGDKPHKYKTSLLLQNSTDSDINDLIDFFTQQNIIVAMFNDSDYVSAAPHSAALNVVQSEKDYVFTAVFNSTMVYSLPVMMNIISNYYLYHLNVTDTIQIWSTPFIQEITDIVFKVELYFQAALLGIIVTAMPPYFAMENAENHKIKAYTQLKLSGLLPSAYWIGQAVVDIPLFFVVLTLMLGSLFAFHHGLYFYPVKFLAVVFCLIAYVPSVILFTYIASFTFKKILNTKEFWSFIYSVTALACVAVTEITFFLGYGVTAVFHYTFCIAIPIYPLLGCLISFIKGSWKNIPKTENAYNPWDRLLVAVIMPYLQCVLWIFLLQHYEKKHGGRSIRKDPLFRALSQKAKHKKFPEPPINEDEDEDVKAERLKVKELMGCQCCEEKPAIMVYNLHKEYDDKKDFLHSRKTTKVATKYVSFCVKKGEILGLLGPNGAGKSTIINILVGDVEPTSGKIFLGDYGSHSNEDDESTKCMGYCPQTNPLWPDITLQEHFEIYGAVKGMSSGDMKEVISRITKALDLKEHLQKTVKKLPAGIKRKLCFALSMLGNPQVTLLDEPSTGMDPRAKQHMWRAIRTAFKNKKRAALLTTHYMEEAEAVCDRVAIMVSGQLRCIGTVQHLKSKFGKGYFLEIKLKDWIENLEIDRLQREIQYIFPNASRQESFSSILAYKIPKEDVQSLSQSFAKLEEAKHTFAIEEYSFSQATLEQVFVELTKEQEEEDNSCGTLNSTLWWERRQEDRVVF.

A helical transmembrane segment spans residues 32–52 (SVQEILFPLFFLFWLILISMM). N-linked (GlcNAc...) asparagine glycans are attached at residues Asn-86 and Asn-190. Helical transmembrane passes span 220-240 (VILI…AIHI), 264-284 (LSWV…MAVI), 297-317 (IVIF…ALML), 327-347 (VGVV…LIVL), 355-375 (LVWL…AQVM), and 396-416 (LIIT…LAVY). N-linked (GlcNAc...) asparagine glycosylation occurs at Asn-458. An ABC transporter 1 domain is found at 478-713 (IRISGIQKAY…WGIGYRLSMY (236 aa)). Residue 514-521 (GHSGTGKS) participates in ATP binding. The chain crosses the membrane as a helical span at residues 866-886 (LLLLLIFFAVQIFMFLVHHSF). The N-linked (GlcNAc...) asparagine glycan is linked to Asn-919. The helical transmembrane segment at 967–987 (VFTAVFNSTMVYSLPVMMNII) threads the bilayer. Asn-996 is a glycosylation site (N-linked (GlcNAc...) asparagine). 6 helical membrane passes run 1021 to 1041 (LYFQ…YFAM), 1071 to 1091 (VVDI…LFAF), 1102 to 1122 (FLAV…FTYI), 1139 to 1159 (FIYS…FFLG), 1164 to 1184 (AVFH…GCLI), and 1207 to 1227 (LLVA…LLQH). An ABC transporter 2 domain is found at 1290-1533 (IMVYNLHKEY…FGKGYFLEIK (244 aa)). 1333 to 1340 (GPNGAGKS) serves as a coordination point for ATP.

This sequence belongs to the ABC transporter superfamily. ABCA family. N-glycosylated. In terms of tissue distribution, expressed in testis, epididymis, lung and brain.

It is found in the lysosome membrane. The protein localises to the late endosome membrane. The protein resides in the golgi apparatus membrane. Its subcellular location is the cell membrane. It catalyses the reaction cholesterol(in) + ATP + H2O = cholesterol(out) + ADP + phosphate + H(+). Its function is as follows. Cholesterol efflux transporter in macrophages that is responsible for APOAI/high-density lipoproteins (HDL) formation at the plasma membrane under high cholesterol levels and participates in reverse cholesterol transport. May play a role in the processing of autolysosomes. The chain is Cholesterol transporter ABCA5 from Rattus norvegicus (Rat).